We begin with the raw amino-acid sequence, 214 residues long: Ribosomal RNA small subunit methyltransferase G (214 aa).

S-adenosyl-L-methionine contacts are provided by residues G72, F77, 125–126 (VE), and R141.

Belongs to the methyltransferase superfamily. RNA methyltransferase RsmG family.

Its subcellular location is the cytoplasm. It catalyses the reaction guanosine(527) in 16S rRNA + S-adenosyl-L-methionine = N(7)-methylguanosine(527) in 16S rRNA + S-adenosyl-L-homocysteine. Specifically methylates the N7 position of guanine in position 527 of 16S rRNA. The sequence is that of Ribosomal RNA small subunit methyltransferase G from Sinorhizobium fredii (strain NBRC 101917 / NGR234).